Reading from the N-terminus, the 351-residue chain is Type II methyltransferase M.DsaV (351 aa).

Residues 6-312 (LKFIDLFAGI…QKMLSYIDLT (307 aa)) form the SAM-dependent MTase C5-type domain. C75 is a catalytic residue.

It belongs to the class I-like SAM-binding methyltransferase superfamily. C5-methyltransferase family.

The enzyme catalyses a 2'-deoxycytidine in DNA + S-adenosyl-L-methionine = a 5-methyl-2'-deoxycytidine in DNA + S-adenosyl-L-homocysteine + H(+). In terms of biological role, a methylase, recognizes the double-stranded sequence 5'-CCNGG-3', methylates C-2 on both strands, and protects the DNA from cleavage by the DsaV endonuclease. In Dactylococcopsis salina (Myxobaktron salinum), this protein is Type II methyltransferase M.DsaV.